The following is a 456-amino-acid chain: Adenylosuccinate synthetase (456 aa).

GTP-binding positions include 11 to 17 (GDEGKGG) and 39 to 41 (GHT). Asp-12 acts as the Proton acceptor in catalysis. The Mg(2+) site is built by Asp-12 and Gly-39. Residues 12-15 (DEGK), 37-40 (NAGH), Thr-127, Arg-141, Gln-232, Thr-247, and Arg-328 each bind IMP. His-40 serves as the catalytic Proton donor. A substrate-binding site is contributed by 324-330 (TVTGRPR). Residues Arg-330, 356–358 (HLD), and 441–443 (GVG) each bind GTP.

This sequence belongs to the adenylosuccinate synthetase family. Homodimer. Mg(2+) serves as cofactor.

The protein resides in the cytoplasm. The catalysed reaction is IMP + L-aspartate + GTP = N(6)-(1,2-dicarboxyethyl)-AMP + GDP + phosphate + 2 H(+). Its pathway is purine metabolism; AMP biosynthesis via de novo pathway; AMP from IMP: step 1/2. Its function is as follows. Plays an important role in the de novo pathway of purine nucleotide biosynthesis. Catalyzes the first committed step in the biosynthesis of AMP from IMP. This Natronomonas pharaonis (strain ATCC 35678 / DSM 2160 / CIP 103997 / JCM 8858 / NBRC 14720 / NCIMB 2260 / Gabara) (Halobacterium pharaonis) protein is Adenylosuccinate synthetase.